The sequence spans 728 residues: Magnetosome formation protease MamE (728 aa).

Over 1-21 (MAMFNGDVEDGGRGDASCGKD) the chain is Cytoplasmic. Residues 22-42 (LKRYLMLMGVVALVVLFGAFI) form a helical membrane-spanning segment. The Lumenal segment spans residues 43–728 (YRQSSGGLRL…RNGQEFWIVL (686 aa)). Residues His188, Asp221, and Ser297 each act as charge relay system in the active site. An MCR (magnetochrome) 1 motif is present at residues 375 to 398 (IFAGTRAPHTDGRQNMDCTTCHDL). Cys392, Cys395, His396, Cys438, Cys441, and His442 together coordinate heme. The MCR 2 motif lies at 421–444 (IPMGAVSPHTDGRQNMNCANCHQM). PDZ domains lie at 471-573 (AINI…LRDG) and 622-721 (PAVM…NRNG).

In the N-terminal section; belongs to the peptidase S1C family. In terms of assembly, might interact with MamB via PDZ1. Heme is required as a cofactor. In terms of processing, subject to autocatalytic cleavage; cleavage also requires MamO.

The protein localises to the magnetosome membrane. Autoproteolysis is stimulated by exogenous substrates or peptides that bind to its PDZ domains; may be stimulated by an environmental cue in vivo. Protease activity is tightly regulated; increasing its activity decreases substrate levels and disturbs biomineralization. Acts at 2 distinct steps of magnetosome formation; required for correct localization of proteins to the magnetosome while the protease activity is required for maturation of small magnetite crystals into larger, functional ones. The 2 functions are separable by mutation. Probably cleaves at least itself, MamO and MamP; cleavage requires the putative transport domain of MamO. Involved in localization of some proteins (at least MamA, MamC, MamF, MamI and MamJ) to the magnetosome. The polypeptide is Magnetosome formation protease MamE (mamE) (Paramagnetospirillum magneticum (strain ATCC 700264 / AMB-1) (Magnetospirillum magneticum)).